A 429-amino-acid polypeptide reads, in one-letter code: Glutamate-1-semialdehyde 2,1-aminomutase 1 (429 aa).

The residue at position 268 (K268) is an N6-(pyridoxal phosphate)lysine.

Belongs to the class-III pyridoxal-phosphate-dependent aminotransferase family. HemL subfamily. In terms of assembly, homodimer. The cofactor is pyridoxal 5'-phosphate.

Its subcellular location is the cytoplasm. It carries out the reaction (S)-4-amino-5-oxopentanoate = 5-aminolevulinate. It participates in porphyrin-containing compound metabolism; protoporphyrin-IX biosynthesis; 5-aminolevulinate from L-glutamyl-tRNA(Glu): step 2/2. The protein is Glutamate-1-semialdehyde 2,1-aminomutase 1 of Staphylococcus haemolyticus (strain JCSC1435).